A 206-amino-acid polypeptide reads, in one-letter code: Ras-related protein RABH1a (206 aa).

Residue 14-21 participates in GTP binding; it reads GDQGVGKT. The short motif at 36 to 44 is the Effector region element; that stretch reads YQATIGIDF. GTP is bound by residues 62–66, 120–123, and 150–151; these read DTAGQ, NKTD, and SA. 2 S-geranylgeranyl cysteine lipidation sites follow: Cys-204 and Cys-206. Cys-206 bears the Cysteine methyl ester mark.

Belongs to the small GTPase superfamily. Rab family.

It localises to the golgi apparatus membrane. In terms of biological role, protein transport. Regulator of membrane traffic from the Golgi apparatus towards the endoplasmic reticulum (ER). The protein is Ras-related protein RABH1a (RABH1A) of Arabidopsis thaliana (Mouse-ear cress).